The chain runs to 470 residues: Sorting nexin-17 (470 aa).

A PX domain is found at 1-109; it reads MHFSIPETES…SFLRRAQQET (109 aa). Residues R36, S38, K62, and R75 each contribute to the a 1,2-diacyl-sn-glycero-3-phospho-(1D-myo-inositol-3-phosphate) site. Positions 115–206 constitute a Ras-associating domain; that stretch reads EEVSLEVLLS…YKIVLRKSYW (92 aa). Positions 115–432 are FERM-like; that stretch reads EEVSLEVLLS…DATRESMVKL (318 aa). Positions 270–432 are PTB-like F3 module; the sequence is GYLRFDACVA…DATRESMVKL (163 aa). A phosphoserine mark is found at S336, S407, S409, S415, S421, S437, and S440. Residues 400-425 form a disordered region; that stretch reads VGGTLRRSDSQQAVKSPPLLESPDAT.

Belongs to the sorting nexin family. In terms of assembly, monomer. Interacts with APP (via cytoplasmic YXNPXY motif). Interacts with KIF1B. Interacts with the C-termini of P-selectin, PTC, LDLR, VLDLR, LRP1 and LRP8. Interacts with KRIT1 (via N-terminus). Interacts with HRAS. Interacts with ITGB1 and ITGB5 (via NPxY motif). Interacts with CCDC22 and CCDC93; the interaction associates SNX17 with the CCC complex. Interacts (via C-terminus) with VPS26C and VPS35L; the interactions are direct and associate SNX17 with the retriever complex.

It is found in the cytoplasm. The protein resides in the early endosome. It localises to the cytoplasmic vesicle membrane. Functionally, critical regulator of endosomal recycling of numerous surface proteins, including integrins, signaling receptor and channels. Binds to NPxY sequences in the cytoplasmic tails of target cargos. Associates with retriever and CCC complexes to prevent lysosomal degradation and promote cell surface recycling of numerous cargos such as integrins ITGB1, ITGB5 and their associated alpha subunits. Also required for maintenance of normal cell surface levels of APP and LRP1. Interacts with membranes containing phosphatidylinositol 3-phosphate (PtdIns(3P)). This is Sorting nexin-17 (SNX17) from Pongo abelii (Sumatran orangutan).